We begin with the raw amino-acid sequence, 478 residues long: MTLSFITRWRDELPETYTALSPTPLNNARLIWHNTELANTLSIPSSLFKNGAGVWGGENLLPGMSPLAQVYSGHQFGVWAGQLGDGRGILLGEQLLADGTTMDWHLKGAGLTPYSRMGDGRAVLRSTIRESLASEAMHYLGIPTTRALSIVTSDSPVYRETVESGAMLMRVAPSHLRFGHFEHFYYRREPEKVRQLADFAIRHYWSHLDDEEDKYRLWFTDVVARTASLIAQWQTVGFAHGVMNTDNMSLLGLTLDYGPFGFLDDYEPGFICNHSDHQGRYSFDNQPAVALWNLQRLAQTLSPFVAVDALNEALDSYQQVLLTHYGQRMRQKLGFMTEQKEDNALLNELFSLMARERSDYTRTFRMLSLTEQHSAASPLRDEFIDRAAFDDWFARYRVRLQQDEVTDSERQQLMQSVNPALVLRNWLAQRAIEAAEKGDMTELHRLHEALRNPFSDRDDDYVSRPPDWGKRLEVSCSS.

Residues G84, G86, R87, K107, D119, G120, R170, and R177 each contribute to the ATP site. The Proton acceptor role is filled by D246. Residues N247 and D256 each contribute to the Mg(2+) site. Residue D256 coordinates ATP.

The protein belongs to the SELO family. The cofactor is Mg(2+). It depends on Mn(2+) as a cofactor.

It catalyses the reaction L-seryl-[protein] + ATP = 3-O-(5'-adenylyl)-L-seryl-[protein] + diphosphate. It carries out the reaction L-threonyl-[protein] + ATP = 3-O-(5'-adenylyl)-L-threonyl-[protein] + diphosphate. The enzyme catalyses L-tyrosyl-[protein] + ATP = O-(5'-adenylyl)-L-tyrosyl-[protein] + diphosphate. The catalysed reaction is L-histidyl-[protein] + UTP = N(tele)-(5'-uridylyl)-L-histidyl-[protein] + diphosphate. It catalyses the reaction L-seryl-[protein] + UTP = O-(5'-uridylyl)-L-seryl-[protein] + diphosphate. It carries out the reaction L-tyrosyl-[protein] + UTP = O-(5'-uridylyl)-L-tyrosyl-[protein] + diphosphate. Nucleotidyltransferase involved in the post-translational modification of proteins. It can catalyze the addition of adenosine monophosphate (AMP) or uridine monophosphate (UMP) to a protein, resulting in modifications known as AMPylation and UMPylation. In Escherichia coli O127:H6 (strain E2348/69 / EPEC), this protein is Protein nucleotidyltransferase YdiU.